Consider the following 216-residue polypeptide: Phosphatidylserine decarboxylase proenzyme (216 aa).

Serine 182 acts as the Schiff-base intermediate with substrate; via pyruvic acid in catalysis. Serine 182 carries the post-translational modification Pyruvic acid (Ser); by autocatalysis.

This sequence belongs to the phosphatidylserine decarboxylase family. PSD-A subfamily. In terms of assembly, heterodimer of a large membrane-associated beta subunit and a small pyruvoyl-containing alpha subunit. Pyruvate is required as a cofactor. In terms of processing, is synthesized initially as an inactive proenzyme. Formation of the active enzyme involves a self-maturation process in which the active site pyruvoyl group is generated from an internal serine residue via an autocatalytic post-translational modification. Two non-identical subunits are generated from the proenzyme in this reaction, and the pyruvate is formed at the N-terminus of the alpha chain, which is derived from the carboxyl end of the proenzyme. The post-translation cleavage follows an unusual pathway, termed non-hydrolytic serinolysis, in which the side chain hydroxyl group of the serine supplies its oxygen atom to form the C-terminus of the beta chain, while the remainder of the serine residue undergoes an oxidative deamination to produce ammonia and the pyruvoyl prosthetic group on the alpha chain.

The protein resides in the cell membrane. The enzyme catalyses a 1,2-diacyl-sn-glycero-3-phospho-L-serine + H(+) = a 1,2-diacyl-sn-glycero-3-phosphoethanolamine + CO2. Its pathway is phospholipid metabolism; phosphatidylethanolamine biosynthesis; phosphatidylethanolamine from CDP-diacylglycerol: step 2/2. Its function is as follows. Catalyzes the formation of phosphatidylethanolamine (PtdEtn) from phosphatidylserine (PtdSer). The polypeptide is Phosphatidylserine decarboxylase proenzyme (Burkholderia pseudomallei (strain 1106a)).